We begin with the raw amino-acid sequence, 142 residues long: Large ribosomal subunit protein uL13 (142 aa).

This sequence belongs to the universal ribosomal protein uL13 family. In terms of assembly, part of the 50S ribosomal subunit.

In terms of biological role, this protein is one of the early assembly proteins of the 50S ribosomal subunit, although it is not seen to bind rRNA by itself. It is important during the early stages of 50S assembly. The protein is Large ribosomal subunit protein uL13 of Actinobacillus pleuropneumoniae serotype 5b (strain L20).